A 339-amino-acid polypeptide reads, in one-letter code: UPF0324 membrane protein M6_Spy0799 (339 aa).

Helical transmembrane passes span 7-24 (KLPG…AWYL), 28-50 (FPII…FYEH), 57-79 (GISF…GLNL), 84-106 (AVGM…VAYG), 118-140 (ATLV…APVI), 150-172 (AISV…GQLL), 256-275 (FILF…SLGV), 290-307 (FIVM…LVKL), and 314-336 (AILL…QLSL).

The protein belongs to the UPF0324 family.

Its subcellular location is the cell membrane. This is UPF0324 membrane protein M6_Spy0799 from Streptococcus pyogenes serotype M6 (strain ATCC BAA-946 / MGAS10394).